The following is a 365-amino-acid chain: 3-isopropylmalate dehydrogenase (365 aa).

80 to 91 (GPKWGTGEVRPE) serves as a coordination point for NAD(+). 4 residues coordinate substrate: R98, R108, R137, and D226. 3 residues coordinate Mg(2+): D226, D251, and D255. 290–301 (GSAPDLPKNKVN) contacts NAD(+).

It belongs to the isocitrate and isopropylmalate dehydrogenases family. In terms of assembly, homodimer. Mg(2+) serves as cofactor. It depends on Mn(2+) as a cofactor.

Its subcellular location is the cytoplasm. The enzyme catalyses (2R,3S)-3-isopropylmalate + NAD(+) = 4-methyl-2-oxopentanoate + CO2 + NADH. It participates in amino-acid biosynthesis; L-leucine biosynthesis; L-leucine from 3-methyl-2-oxobutanoate: step 3/4. Its function is as follows. Catalyzes the oxidation of 3-carboxy-2-hydroxy-4-methylpentanoate (3-isopropylmalate) to 3-carboxy-4-methyl-2-oxopentanoate. The product decarboxylates to 4-methyl-2 oxopentanoate. The chain is 3-isopropylmalate dehydrogenase (LEU2) from Candida boidinii (Yeast).